The primary structure comprises 211 residues: Adenylate kinase (211 aa).

ATP is bound at residue 10 to 15 (GSGKGT). Residues 30–59 (STGDLFRENILNSTALGQEIKKIVERGELV) are NMP. Residues Thr31, Arg36, 57-59 (ELV), 85-88 (GFPR), and Gln92 contribute to the AMP site. Residues 121–158 (GRRICKSCNNIFNIYTLTTKKNGICDVCGGDLYQREDD) are LID. Residue Arg122 participates in ATP binding. Positions 125 and 128 each coordinate Zn(2+). 131–132 (IF) lines the ATP pocket. Zn(2+) contacts are provided by Cys145 and Cys148. Positions 155 and 166 each coordinate AMP. Residue Val194 coordinates ATP.

Belongs to the adenylate kinase family. As to quaternary structure, monomer.

It localises to the cytoplasm. The catalysed reaction is AMP + ATP = 2 ADP. Its pathway is purine metabolism; AMP biosynthesis via salvage pathway; AMP from ADP: step 1/1. Catalyzes the reversible transfer of the terminal phosphate group between ATP and AMP. Plays an important role in cellular energy homeostasis and in adenine nucleotide metabolism. In Borreliella burgdorferi (strain ATCC 35210 / DSM 4680 / CIP 102532 / B31) (Borrelia burgdorferi), this protein is Adenylate kinase.